Consider the following 266-residue polypeptide: Killer cell lectin-like receptor 5 (266 aa).

The Cytoplasmic portion of the chain corresponds to 1-44 (MSEPEVTYSTVRLHKSSGLQRLVSHEEIQGPGEAGYRKCSVPWQ). The helical; Signal-anchor for type II membrane protein transmembrane segment at 45-66 (LTVRSLGIFCFLLLVTVAVLAV) threads the bilayer. The Extracellular segment spans residues 67–266 (KIFQYSQHKQ…CGKKLDHFPG (200 aa)). N-linked (GlcNAc...) asparagine glycosylation is found at N87 and N104. The 119-residue stretch at 143-261 (GVKHWFCYGT…SYFCICGKKL (119 aa)) folds into the C-type lectin domain. 4 cysteine pairs are disulfide-bonded: C149–C154, C167–C255, C171–C257, and C236–C249. N-linked (GlcNAc...) asparagine glycosylation is present at N250.

In terms of assembly, homodimer; disulfide-linked. Mostly expressed in NK cells, but also observed on NK T and memory T-cells.

It localises to the membrane. Its function is as follows. Receptor on natural killer (NK) cells for class I MHC. In Mus musculus (Mouse), this protein is Killer cell lectin-like receptor 5 (Klra5).